Consider the following 198-residue polypeptide: Nucleoplasmin (198 aa).

Positions 35 to 38 are acidic tract A1; sequence SDED. A compositionally biased stretch (acidic residues) spans 125-145; sequence SWAEEEGEEEVEEEEEEEDPE. The disordered stretch occupies residues 125 to 198; it reads SWAEEEGEEE…GRGRKPAAKK (74 aa). Residues 128–145 are acidic tract A2; that stretch reads EEEGEEEVEEEEEEEDPE. A compositionally biased stretch (basic residues) spans 150-167; it reads AVKRPAASKKGSQAKKKK. The Bipartite nuclear localization signal motif lies at 152 to 167; sequence KRPAASKKGSQAKKKK. Residues 172–174 form an acidic tract A3 region; sequence EEE. Over residues 183 to 198 the composition is skewed to basic residues; sequence KKGKGAGRGRKPAAKK.

It belongs to the nucleoplasmin family. As to quaternary structure, homopentamer. In terms of tissue distribution, expressed in oocytes.

It localises to the nucleus. Functionally, acts as a chaperone for histones, such as histone H2A-H2B, and thus regulates the assembly of nucleosome cores. Involved in chromatin remodeling, especially during fertilization and early embryonic development. May be involved in sperm chromatin decondensation during fertilization. This chain is Nucleoplasmin, found in Rhinella marina (Cane toad).